A 280-amino-acid chain; its full sequence is Formamidopyrimidine-DNA glycosylase (280 aa).

Pro-2 (schiff-base intermediate with DNA) is an active-site residue. The active-site Proton donor is the Glu-3. Lys-60 acts as the Proton donor; for beta-elimination activity in catalysis. DNA-binding residues include His-93 and Arg-112. The FPG-type zinc-finger motif lies at 240 to 274 (YVYGQHSKPCRVCGADIIKIKVGGRGTHLCPTCQP). Arg-264 serves as the catalytic Proton donor; for delta-elimination activity.

The protein belongs to the FPG family. Monomer. Zn(2+) serves as cofactor.

It catalyses the reaction Hydrolysis of DNA containing ring-opened 7-methylguanine residues, releasing 2,6-diamino-4-hydroxy-5-(N-methyl)formamidopyrimidine.. The catalysed reaction is 2'-deoxyribonucleotide-(2'-deoxyribose 5'-phosphate)-2'-deoxyribonucleotide-DNA = a 3'-end 2'-deoxyribonucleotide-(2,3-dehydro-2,3-deoxyribose 5'-phosphate)-DNA + a 5'-end 5'-phospho-2'-deoxyribonucleoside-DNA + H(+). Its function is as follows. Involved in base excision repair of DNA damaged by oxidation or by mutagenic agents. Acts as a DNA glycosylase that recognizes and removes damaged bases. Has a preference for oxidized purines, such as 7,8-dihydro-8-oxoguanine (8-oxoG). Has AP (apurinic/apyrimidinic) lyase activity and introduces nicks in the DNA strand. Cleaves the DNA backbone by beta-delta elimination to generate a single-strand break at the site of the removed base with both 3'- and 5'-phosphates. The protein is Formamidopyrimidine-DNA glycosylase of Oceanobacillus iheyensis (strain DSM 14371 / CIP 107618 / JCM 11309 / KCTC 3954 / HTE831).